A 166-amino-acid polypeptide reads, in one-letter code: 3-isopropylmalate dehydratase small subunit (166 aa).

It belongs to the LeuD family. LeuD type 2 subfamily. As to quaternary structure, heterodimer of LeuC and LeuD.

It carries out the reaction (2R,3S)-3-isopropylmalate = (2S)-2-isopropylmalate. It participates in amino-acid biosynthesis; L-leucine biosynthesis; L-leucine from 3-methyl-2-oxobutanoate: step 2/4. Its function is as follows. Catalyzes the isomerization between 2-isopropylmalate and 3-isopropylmalate, via the formation of 2-isopropylmaleate. The sequence is that of 3-isopropylmalate dehydratase small subunit from Nautilia profundicola (strain ATCC BAA-1463 / DSM 18972 / AmH).